The primary structure comprises 142 residues: Hemoglobin subunit alpha (142 aa).

The Globin domain occupies 2–142 (VLSPADKTNV…VSTVLTSKYR (141 aa)). S4 bears the Phosphoserine mark. Residue K8 is modified to N6-succinyllysine. T9 carries the post-translational modification Phosphothreonine. K12 carries the post-translational modification N6-succinyllysine. The residue at position 17 (K17) is an N6-acetyllysine; alternate. K17 bears the N6-succinyllysine; alternate mark. Y25 is modified (phosphotyrosine). S36 bears the Phosphoserine mark. K41 is subject to N6-succinyllysine. S50 is modified (phosphoserine). H59 is a binding site for O2. Residue H88 coordinates heme b. Position 103 is a phosphoserine (S103). Residue T109 is modified to Phosphothreonine. 2 positions are modified to phosphoserine: S125 and S132. Phosphothreonine occurs at positions 135 and 138. S139 carries the phosphoserine modification.

The protein belongs to the globin family. As to quaternary structure, heterotetramer of two alpha chains and two beta chains in adult hemoglobin A (HbA); two alpha chains and two delta chains in adult hemoglobin A2 (HbA2); two alpha chains and two epsilon chains in early embryonic hemoglobin Gower-2; two alpha chains and two gamma chains in fetal hemoglobin F (HbF). In terms of tissue distribution, red blood cells.

In terms of biological role, involved in oxygen transport from the lung to the various peripheral tissues. Its function is as follows. Hemopressin acts as an antagonist peptide of the cannabinoid receptor CNR1. Hemopressin-binding efficiently blocks cannabinoid receptor CNR1 and subsequent signaling. This is Hemoglobin subunit alpha (HBA1) from Pan paniscus (Pygmy chimpanzee).